A 1162-amino-acid polypeptide reads, in one-letter code: MNQWQLSYQSPVELTEHLRKSYWAYDAKEKSATKMAFDQDVNLIWVGDTYGRVSSYDPSYSLYTRHTAHIGAEPVVELLSHKQGVLSLGGESLNFANRRSVTKLHVTSADIAQLCDMRAMCYGSNSQNTVYCGGTNLASGLVAVDLVKGRLSNTVQYSSKVKLMQSSNRLMAVARQNGMLDLLDPNSNTVVKTFSGHSCMVSSMDFRDHTLVTAGKSKRFNMMYPDQFVNVYDLRIMKQLPPISFSKNTEYMGNGACYMVGADFVQLHPILPTVVVIGSVTGAFDFVDLSNPTVRTQYCHPCQSVTQLQLSPSGDYIAFIEHDNNINMWSRSNGMTGFTSTATTILEYPDYPDDGILAGATSIDDYSYPLSSVGLPYYNEKLLSAWHQTVFRSDGTIPMKVPLPPKSSAASSSHTALSTSSDSRPNTARSGNPSSGGQKYRLLPYDRHKYGHRNVAVPYRSLRERKKKLLITDEDGKDKQELMNYKPSNDREVPPAFTKLQMVYGRFGVQDFDFKAFNKTRYSGLETDIDNVYTNAVLQMYRFVPEVYNFLVSCLKMENFSDNSLLTELGSLYDMMVRANGEICRSSNFQEALASIPKSYLLGLITDSIDNALEPNTTVSGTSISDSDASGSSMTAKLESMVLGDDKTTISCHDNNDNSLTTPQKFNTFLLNRLLFEELQMKINTTQSIVLEELLGIDVQVTTRSISPCANFTRRSDIIPVLTVTSPISNNIKYVNKKLNNQTILPYIESSMSRLKHTKAMCEKCFKCETVESEKTVRNLPPLLSLNISLTSDEWATAKTVRGWLTKEFYATISKDRPILKLQPTDLKTTNAIFKYELNGYVARICDYITEPHLVAYSKIFDPTTRTYKWYMFNDFLVQEVDEEEALNISYWWKTPEIAIYSDAEELTKPFVPASFYTINYSILYRDHFANGMRESIKKEYRLLTAEEAPKPGSLVALDAEFVALSEDQVEISCKGTKTLIKPAKTALARVSVLRGEGDLAGVPFIDDYIVNTKHIEDYLTKYSGIEPGDLDPDTSSKPLVTRRVVLRKIWLLLQLGCIFVGHGLYNDFRNINIHVPKEQTRDTALYYLQGRRYLSLRYLAYALLDKDIQKGNHDSIEDAYTALVLYRKYLDLREKGIFETVLNRIYEEGRASNYRVPGDLQ.

WD repeat units follow at residues 27 to 66 (AKEK…YTRH), 153 to 193 (NTVQ…VVKT), 196 to 233 (GHSC…NVYD), and 300 to 339 (HPCQ…TGFT). Residues 341-491 (TATTILEYPD…LMNYKPSNDR (151 aa)) form a linker region. Residues 401–443 (VPLPPKSSAASSSHTALSTSSDSRPNTARSGNPSSGGQKYRLL) form a disordered region. Low complexity predominate over residues 407–423 (SSAASSSHTALSTSSDS). A compositionally biased stretch (polar residues) spans 424–437 (RPNTARSGNPSSGG). In terms of domain architecture, USP spans 492–904 (EVPPAFTKLQ…TPEIAIYSDA (413 aa)). In terms of domain architecture, Exonuclease spans 956-1126 (VALDAEFVAL…IEDAYTALVL (171 aa)). Positions 959, 961, 1068, and 1119 each coordinate a divalent metal cation.

It belongs to the peptidase C19 family. PAN2 subfamily. In terms of assembly, forms a heterotrimer with an asymmetric homodimer of the regulatory subunit PAN3 to form the poly(A)-nuclease (PAN) deadenylation complex. A divalent metal cation is required as a cofactor.

It is found in the cytoplasm. The catalysed reaction is Exonucleolytic cleavage of poly(A) to 5'-AMP.. Its activity is regulated as follows. Positively regulated by the regulatory subunit PAN3. Its function is as follows. Catalytic subunit of the poly(A)-nuclease (PAN) deadenylation complex, one of two cytoplasmic mRNA deadenylases involved in mRNA turnover. PAN specifically shortens poly(A) tails of RNA and the activity is stimulated by poly(A)-binding protein PAB1. PAN deadenylation is followed by rapid degradation of the shortened mRNA tails by the CCR4-NOT complex. Deadenylated mRNAs are then degraded by two alternative mechanisms, namely exosome-mediated 3'-5' exonucleolytic degradation, or deadenylation-dependent mRNA decaping and subsequent 5'-3' exonucleolytic degradation by XRN1. May also be involved in post-transcriptional maturation of mRNA poly(A) tails. The protein is PAN2-PAN3 deadenylation complex catalytic subunit PAN2 of Eremothecium gossypii (strain ATCC 10895 / CBS 109.51 / FGSC 9923 / NRRL Y-1056) (Yeast).